A 249-amino-acid polypeptide reads, in one-letter code: DNA polymerase sliding clamp (249 aa).

Belongs to the PCNA family. Homotrimer. The subunits circularize to form a toroid; DNA passes through its center. Replication factor C (RFC) is required to load the toroid on the DNA.

Its function is as follows. Sliding clamp subunit that acts as a moving platform for DNA processing. Responsible for tethering the catalytic subunit of DNA polymerase and other proteins to DNA during high-speed replication. This Thermococcus gammatolerans (strain DSM 15229 / JCM 11827 / EJ3) protein is DNA polymerase sliding clamp.